A 21-amino-acid chain; its full sequence is Thioredoxin (21 aa).

Lys3 carries the post-translational modification N6-acetyllysine. Lys8 is modified (N6-succinyllysine).

The protein belongs to the thioredoxin family. In terms of assembly, homodimer; disulfide-linked. Interacts with TXNIP through the redox-active site. Interacts with MAP3K5 and CASP3. Interacts with APEX1; the interaction stimulates the FOS/JUN AP-1 DNA-binding activity in a redox-dependent manner.

The protein localises to the nucleus. It localises to the cytoplasm. The protein resides in the secreted. Its function is as follows. Participates in various redox reactions through the reversible oxidation of its active center dithiol to a disulfide and catalyzes dithiol-disulfide exchange reactions. Plays a role in the reversible S-nitrosylation of cysteine residues in target proteins, and thereby contributes to the response to intracellular nitric oxide. Nitrosylates the active site Cys of CASP3 in response to nitric oxide (NO), and thereby inhibits caspase-3 activity. Induces the FOS/JUN AP-1 DNA binding activity in ionizing radiation (IR) cells through its oxidation/reduction status and stimulates AP-1 transcriptional activity. The sequence is that of Thioredoxin (TXN) from Canis lupus familiaris (Dog).